The following is a 452-amino-acid chain: Bifunctional protein GlmU (452 aa).

Residues 1–226 form a pyrophosphorylase region; the sequence is MNFSAVILAA…PIEVEGVNDR (226 aa). Residues 8–11, K22, Q73, 78–79, 100–102, G137, E151, N166, and N224 each bind UDP-N-acetyl-alpha-D-glucosamine; these read LAAG, GT, and YGD. A Mg(2+)-binding site is contributed by D102. Mg(2+) is bound at residue N224. The tract at residues 227 to 247 is linker; that stretch reads AQLARLERAYQAAQAQKLLEQ. Positions 248-452 are N-acetyltransferase; it reads GVMLRDPSRF…IANWQRPTKK (205 aa). UDP-N-acetyl-alpha-D-glucosamine is bound by residues R330 and K348. Catalysis depends on H360, which acts as the Proton acceptor. The UDP-N-acetyl-alpha-D-glucosamine site is built by Y363 and N374. Acetyl-CoA is bound by residues A377, 383–384, S402, A420, and R437; that span reads NY.

The protein in the N-terminal section; belongs to the N-acetylglucosamine-1-phosphate uridyltransferase family. In the C-terminal section; belongs to the transferase hexapeptide repeat family. Homotrimer. The cofactor is Mg(2+).

The protein resides in the cytoplasm. The catalysed reaction is alpha-D-glucosamine 1-phosphate + acetyl-CoA = N-acetyl-alpha-D-glucosamine 1-phosphate + CoA + H(+). The enzyme catalyses N-acetyl-alpha-D-glucosamine 1-phosphate + UTP + H(+) = UDP-N-acetyl-alpha-D-glucosamine + diphosphate. It participates in nucleotide-sugar biosynthesis; UDP-N-acetyl-alpha-D-glucosamine biosynthesis; N-acetyl-alpha-D-glucosamine 1-phosphate from alpha-D-glucosamine 6-phosphate (route II): step 2/2. It functions in the pathway nucleotide-sugar biosynthesis; UDP-N-acetyl-alpha-D-glucosamine biosynthesis; UDP-N-acetyl-alpha-D-glucosamine from N-acetyl-alpha-D-glucosamine 1-phosphate: step 1/1. Its pathway is bacterial outer membrane biogenesis; LPS lipid A biosynthesis. Catalyzes the last two sequential reactions in the de novo biosynthetic pathway for UDP-N-acetylglucosamine (UDP-GlcNAc). The C-terminal domain catalyzes the transfer of acetyl group from acetyl coenzyme A to glucosamine-1-phosphate (GlcN-1-P) to produce N-acetylglucosamine-1-phosphate (GlcNAc-1-P), which is converted into UDP-GlcNAc by the transfer of uridine 5-monophosphate (from uridine 5-triphosphate), a reaction catalyzed by the N-terminal domain. In Aliivibrio fischeri (strain MJ11) (Vibrio fischeri), this protein is Bifunctional protein GlmU.